A 62-amino-acid chain; its full sequence is Small ribosomal subunit protein eS27 (62 aa).

Zn(2+)-binding residues include cysteine 17, cysteine 20, cysteine 36, and cysteine 39. The C4-type zinc finger occupies 17–39 (CPECNNEQIVFGSPATVVKCLTC).

This sequence belongs to the eukaryotic ribosomal protein eS27 family. As to quaternary structure, part of the 30S ribosomal subunit. The cofactor is Zn(2+).

This chain is Small ribosomal subunit protein eS27, found in Methanocaldococcus jannaschii (strain ATCC 43067 / DSM 2661 / JAL-1 / JCM 10045 / NBRC 100440) (Methanococcus jannaschii).